The primary structure comprises 489 residues: UDP-N-acetylmuramoyl-L-alanyl-D-glutamate--2,6-diaminopimelate ligase (489 aa).

Ser-30 is a binding site for UDP-N-acetyl-alpha-D-muramoyl-L-alanyl-D-glutamate. ATP is bound at residue 110 to 116 (GTNGKTT). UDP-N-acetyl-alpha-D-muramoyl-L-alanyl-D-glutamate-binding positions include 152 to 153 (TT), Ser-179, and Arg-187. The residue at position 219 (Lys-219) is an N6-carboxylysine. Residues Arg-381, 405-408 (DNPR), Gly-458, and Glu-462 each bind meso-2,6-diaminopimelate. A Meso-diaminopimelate recognition motif motif is present at residues 405–408 (DNPR).

Belongs to the MurCDEF family. MurE subfamily. The cofactor is Mg(2+). Post-translationally, carboxylation is probably crucial for Mg(2+) binding and, consequently, for the gamma-phosphate positioning of ATP.

It localises to the cytoplasm. It catalyses the reaction UDP-N-acetyl-alpha-D-muramoyl-L-alanyl-D-glutamate + meso-2,6-diaminopimelate + ATP = UDP-N-acetyl-alpha-D-muramoyl-L-alanyl-gamma-D-glutamyl-meso-2,6-diaminopimelate + ADP + phosphate + H(+). It functions in the pathway cell wall biogenesis; peptidoglycan biosynthesis. Catalyzes the addition of meso-diaminopimelic acid to the nucleotide precursor UDP-N-acetylmuramoyl-L-alanyl-D-glutamate (UMAG) in the biosynthesis of bacterial cell-wall peptidoglycan. In Syntrophomonas wolfei subsp. wolfei (strain DSM 2245B / Goettingen), this protein is UDP-N-acetylmuramoyl-L-alanyl-D-glutamate--2,6-diaminopimelate ligase.